We begin with the raw amino-acid sequence, 194 residues long: Translation machinery-associated protein 22 (194 aa).

The 72-residue stretch at 102–173 (VQIKRVERNK…DVQEWLLELY (72 aa)) folds into the SUI1 domain.

This sequence belongs to the DENR family. In terms of assembly, interacts with the 40S ribosomal subunit.

It localises to the cytoplasm. This Neosartorya fischeri (strain ATCC 1020 / DSM 3700 / CBS 544.65 / FGSC A1164 / JCM 1740 / NRRL 181 / WB 181) (Aspergillus fischerianus) protein is Translation machinery-associated protein 22 (tma22).